We begin with the raw amino-acid sequence, 361 residues long: Peptide chain release factor 1 (361 aa).

Glutamine 235 carries the post-translational modification N5-methylglutamine.

This sequence belongs to the prokaryotic/mitochondrial release factor family. In terms of processing, methylated by PrmC. Methylation increases the termination efficiency of RF1.

It localises to the cytoplasm. In terms of biological role, peptide chain release factor 1 directs the termination of translation in response to the peptide chain termination codons UAG and UAA. The protein is Peptide chain release factor 1 of Xanthomonas campestris pv. campestris (strain 8004).